The primary structure comprises 218 residues: Chromophore lyase CpcT/CpeT 1 (218 aa).

Belongs to the CpcT/CpeT biliprotein lyase family.

Functionally, covalently attaches a chromophore to Cys residue(s) of phycobiliproteins. The polypeptide is Chromophore lyase CpcT/CpeT 1 (Synechococcus sp. (strain JA-3-3Ab) (Cyanobacteria bacterium Yellowstone A-Prime)).